The following is a 186-amino-acid chain: Large ribosomal subunit protein bL12c (186 aa).

Residues 1 to 11 (MASTLSTITLR) show a composition bias toward polar residues. Disordered stretches follow at residues 1-23 (MAST…STHA) and 162-186 (EGVS…VSIA). The N-terminal 53 residues, 1–53 (MASTLSTITLRSPSPSTASSTHASIPFPKKALEFPIRTPKLHHRRATFLRPLA), are a transit peptide targeting the chloroplast. Low complexity predominate over residues 12 to 23 (SPSPSTASSTHA). A compositionally biased stretch (basic and acidic residues) spans 162–180 (EGVSKDEAEDAKKQLEEAG).

Belongs to the bacterial ribosomal protein bL12 family.

The protein localises to the plastid. It localises to the chloroplast. This chain is Large ribosomal subunit protein bL12c (RPL12), found in Nicotiana tabacum (Common tobacco).